Consider the following 456-residue polypeptide: Exodeoxyribonuclease 7 large subunit (456 aa).

This sequence belongs to the XseA family. Heterooligomer composed of large and small subunits.

It is found in the cytoplasm. The enzyme catalyses Exonucleolytic cleavage in either 5'- to 3'- or 3'- to 5'-direction to yield nucleoside 5'-phosphates.. Its function is as follows. Bidirectionally degrades single-stranded DNA into large acid-insoluble oligonucleotides, which are then degraded further into small acid-soluble oligonucleotides. In Lactobacillus delbrueckii subsp. bulgaricus (strain ATCC BAA-365 / Lb-18), this protein is Exodeoxyribonuclease 7 large subunit.